The sequence spans 95 residues: Co-chaperonin GroES (95 aa).

It belongs to the GroES chaperonin family. As to quaternary structure, heptamer of 7 subunits arranged in a ring. Interacts with the chaperonin GroEL.

The protein resides in the cytoplasm. Its function is as follows. Together with the chaperonin GroEL, plays an essential role in assisting protein folding. The GroEL-GroES system forms a nano-cage that allows encapsulation of the non-native substrate proteins and provides a physical environment optimized to promote and accelerate protein folding. GroES binds to the apical surface of the GroEL ring, thereby capping the opening of the GroEL channel. In Staphylococcus haemolyticus (strain JCSC1435), this protein is Co-chaperonin GroES.